Reading from the N-terminus, the 430-residue chain is UPF0597 protein DSY1109 (430 aa).

It belongs to the UPF0597 family.

This is UPF0597 protein DSY1109 from Desulfitobacterium hafniense (strain Y51).